The chain runs to 184 residues: Ribose 1,5-bisphosphate phosphokinase PhnN (184 aa).

Residue 11–18 participates in ATP binding; that stretch reads GPSGAGKD.

It belongs to the ribose 1,5-bisphosphokinase family.

The catalysed reaction is alpha-D-ribose 1,5-bisphosphate + ATP = 5-phospho-alpha-D-ribose 1-diphosphate + ADP. Its pathway is metabolic intermediate biosynthesis; 5-phospho-alpha-D-ribose 1-diphosphate biosynthesis; 5-phospho-alpha-D-ribose 1-diphosphate from D-ribose 5-phosphate (route II): step 3/3. Catalyzes the phosphorylation of ribose 1,5-bisphosphate to 5-phospho-D-ribosyl alpha-1-diphosphate (PRPP). This chain is Ribose 1,5-bisphosphate phosphokinase PhnN, found in Burkholderia pseudomallei (strain K96243).